A 475-amino-acid polypeptide reads, in one-letter code: Trifunctional enzyme subunit beta, mitochondrial (475 aa).

The transit peptide at methionine 1 to arginine 34 directs the protein to the mitochondrion. Position 73 is an N6-acetyllysine; alternate (lysine 73). Lysine 73 is modified (N6-succinyllysine; alternate). The active-site Acyl-thioester intermediate is cysteine 139. An intramembrane segment occupies isoleucine 174–serine 221. Position 189 is an N6-acetyllysine; alternate (lysine 189). An N6-succinyllysine; alternate modification is found at lysine 189. An N6-succinyllysine mark is found at lysine 191, lysine 273, and lysine 292. Residue lysine 294 is modified to N6-acetyllysine; alternate. The residue at position 294 (lysine 294) is an N6-succinyllysine; alternate. N6-acetyllysine is present on lysine 299. Residue lysine 333 is modified to N6-acetyllysine; alternate. Lysine 333 is modified (N6-succinyllysine; alternate). 2 positions are modified to N6-acetyllysine: lysine 349 and lysine 362. Catalysis depends on cysteine 459, which acts as the Proton donor/acceptor.

Belongs to the thiolase-like superfamily. Thiolase family. In terms of assembly, heterotetramer of 2 alpha/HADHA and 2 beta/HADHB subunits; forms the mitochondrial trifunctional enzyme. Also purified as higher order heterooligomers including a 4 alpha/HADHA and 4 beta/HADHB heterooligomer which physiological significance remains unclear. The mitochondrial trifunctional enzyme interacts with MTLN. Interacts with RSAD2/viperin.

Its subcellular location is the mitochondrion. The protein localises to the mitochondrion inner membrane. It localises to the mitochondrion outer membrane. The protein resides in the endoplasmic reticulum. It catalyses the reaction an acyl-CoA + acetyl-CoA = a 3-oxoacyl-CoA + CoA. The catalysed reaction is butanoyl-CoA + acetyl-CoA = 3-oxohexanoyl-CoA + CoA. The enzyme catalyses hexanoyl-CoA + acetyl-CoA = 3-oxooctanoyl-CoA + CoA. It carries out the reaction octanoyl-CoA + acetyl-CoA = 3-oxodecanoyl-CoA + CoA. It catalyses the reaction decanoyl-CoA + acetyl-CoA = 3-oxododecanoyl-CoA + CoA. The catalysed reaction is dodecanoyl-CoA + acetyl-CoA = 3-oxotetradecanoyl-CoA + CoA. The enzyme catalyses tetradecanoyl-CoA + acetyl-CoA = 3-oxohexadecanoyl-CoA + CoA. It functions in the pathway lipid metabolism; fatty acid beta-oxidation. Mitochondrial trifunctional enzyme catalyzes the last three of the four reactions of the mitochondrial beta-oxidation pathway. The mitochondrial beta-oxidation pathway is the major energy-producing process in tissues and is performed through four consecutive reactions breaking down fatty acids into acetyl-CoA. Among the enzymes involved in this pathway, the trifunctional enzyme exhibits specificity for long-chain fatty acids. Mitochondrial trifunctional enzyme is a heterotetrameric complex composed of two proteins, the trifunctional enzyme subunit alpha/HADHA carries the 2,3-enoyl-CoA hydratase and the 3-hydroxyacyl-CoA dehydrogenase activities, while the trifunctional enzyme subunit beta/HADHB described here bears the 3-ketoacyl-CoA thiolase activity. This chain is Trifunctional enzyme subunit beta, mitochondrial (HADHB), found in Pan troglodytes (Chimpanzee).